An 875-amino-acid chain; its full sequence is Alanine--tRNA ligase (875 aa).

Positions 564, 568, 666, and 670 each coordinate Zn(2+).

This sequence belongs to the class-II aminoacyl-tRNA synthetase family. In terms of assembly, homotetramer. Zn(2+) is required as a cofactor.

The protein resides in the cytoplasm. It carries out the reaction tRNA(Ala) + L-alanine + ATP = L-alanyl-tRNA(Ala) + AMP + diphosphate. Its function is as follows. Catalyzes the attachment of alanine to tRNA(Ala) in a two-step reaction: alanine is first activated by ATP to form Ala-AMP and then transferred to the acceptor end of tRNA(Ala). Also edits incorrectly charged Ser-tRNA(Ala) and Gly-tRNA(Ala) via its editing domain. The protein is Alanine--tRNA ligase of Yersinia pseudotuberculosis serotype O:1b (strain IP 31758).